Reading from the N-terminus, the 225-residue chain is Pre-mRNA-splicing factor SPF27 (225 aa).

N-acetylalanine is present on Ala-2. The residue at position 94 (Ser-94) is a Phosphoserine. The stretch at Tyr-138–Arg-222 forms a coiled coil.

It belongs to the SPF27 family. Component of the pre-catalytic and catalytic spliceosome complexes. Component of the postcatalytic spliceosome P complex. Component of the PRP19-CDC5L splicing complex composed of a core complex comprising a homotetramer of PRPF19, CDC5L, PLRG1 and BCAS2, and at least three less stably associated proteins CTNNBL1, CWC15 and HSPA8. Interacts directly in the complex with PRPF19, CDC5L and PLRG1. In terms of tissue distribution, ubiquitously expressed.

It is found in the nucleus. Its subcellular location is the nucleolus. Its function is as follows. Required for pre-mRNA splicing as component of the activated spliceosome. Component of the PRP19-CDC5L complex that forms an integral part of the spliceosome and is required for activating pre-mRNA splicing. May have a scaffolding role in the spliceosome assembly as it contacts all other components of the core complex. The PRP19-CDC5L complex may also play a role in the response to DNA damage (DDR). The protein is Pre-mRNA-splicing factor SPF27 (BCAS2) of Homo sapiens (Human).